The sequence spans 173 residues: Shikimate kinase (173 aa).

14-19 provides a ligand contact to ATP; sequence GAGKST. Ser-18 lines the Mg(2+) pocket. Substrate contacts are provided by Asp-36, Arg-60, and Gly-82. Arg-120 is an ATP binding site. Arg-140 is a substrate binding site. Gln-157 contacts ATP.

This sequence belongs to the shikimate kinase family. As to quaternary structure, monomer. The cofactor is Mg(2+).

It is found in the cytoplasm. The enzyme catalyses shikimate + ATP = 3-phosphoshikimate + ADP + H(+). It functions in the pathway metabolic intermediate biosynthesis; chorismate biosynthesis; chorismate from D-erythrose 4-phosphate and phosphoenolpyruvate: step 5/7. Its function is as follows. Catalyzes the specific phosphorylation of the 3-hydroxyl group of shikimic acid using ATP as a cosubstrate. This is Shikimate kinase from Buchnera aphidicola subsp. Acyrthosiphon pisum (strain APS) (Acyrthosiphon pisum symbiotic bacterium).